We begin with the raw amino-acid sequence, 468 residues long: Sorting and assembly machinery component 50 homolog A (468 aa).

The disordered stretch occupies residues 1-24; it reads MGTVHARSLDPLPMNGPDFGSPDD. A POTRA domain is found at 44–124; it reads VVVQRVHFEG…LDVTFEVTEL (81 aa).

The protein belongs to the SAM50/omp85 family. In terms of assembly, associates with the mitochondrial contact site and cristae organizing system (MICOS) complex (also known as MINOS or MitOS complex).

Its subcellular location is the mitochondrion outer membrane. Its function is as follows. May play a role in the maintenance of the structure of mitochondrial cristae. This is Sorting and assembly machinery component 50 homolog A (samm50-a) from Xenopus laevis (African clawed frog).